The primary structure comprises 343 residues: Ribosomal RNA small subunit methyltransferase C (343 aa).

Belongs to the methyltransferase superfamily. RsmC family. As to quaternary structure, monomer.

It localises to the cytoplasm. It carries out the reaction guanosine(1207) in 16S rRNA + S-adenosyl-L-methionine = N(2)-methylguanosine(1207) in 16S rRNA + S-adenosyl-L-homocysteine + H(+). Specifically methylates the guanine in position 1207 of 16S rRNA in the 30S particle. This chain is Ribosomal RNA small subunit methyltransferase C, found in Escherichia coli (strain SMS-3-5 / SECEC).